Reading from the N-terminus, the 437-residue chain is Transcription factor AP-2-alpha (437 aa).

A Glycyl lysine isopeptide (Lys-Gly) (interchain with G-Cter in SUMO); alternate cross-link involves residue Lys10. Lys10 participates in a covalent cross-link: Glycyl lysine isopeptide (Lys-Gly) (interchain with G-Cter in SUMO2); alternate. Positions 14 to 107 are disordered; that stretch reads CEDRHDGTSN…GQRQSQESGL (94 aa). Positions 57 to 62 match the PPxY motif motif; sequence YFPPPY. Composition is skewed to low complexity over residues 65-74 and 88-101; these read IYPQSQDPYS and QPQP…GQRQ. Residues Lys177 and Lys184 each participate in a glycyl lysine isopeptide (Lys-Gly) (interchain with G-Cter in SUMO2) cross-link. A Phosphoserine; by PKA modification is found at Ser239. The H-S-H (helix-span-helix), dimerization stretch occupies residues 280–410; sequence RRKAANVTLL…YLTEALKAMD (131 aa). Positions 414–427 are enriched in polar residues; the sequence is LSNNPNSHTDNNAK. Residues 414–437 are disordered; the sequence is LSNNPNSHTDNNAKSSDKEEKHRK. Residues 428–437 are compositionally biased toward basic and acidic residues; it reads SSDKEEKHRK.

The protein belongs to the AP-2 family. As to quaternary structure, binds DNA as a dimer. Can form homodimers or heterodimers with other AP-2 family members. Interacts with WWOX. Interacts with CITED4. Interacts with UBE2I. Interacts with RALBP1 in a complex also containing EPN1 and NUMB during interphase and mitosis. Interacts with KCTD1; this interaction represses transcription activation. Interacts (via C-terminus) with CITED2 (via C-terminus); the interaction stimulates TFAP2A-transcriptional activation. Interacts (via N-terminus) with EP300 (via N-terminus); the interaction requires CITED2. Interacts with KCTD15; this interaction inhibits TFAP2A transcriptional activation. In terms of processing, sumoylated on Lys-10; which inhibits transcriptional activity.

It is found in the nucleus. Functionally, sequence-specific DNA-binding protein that interacts with inducible viral and cellular enhancer elements to regulate transcription of selected genes. AP-2 factors bind to the consensus sequence 5'-GCCNNNGGC-3' and activate genes involved in a large spectrum of important biological functions including proper eye, face, body wall, limb and neural tube development. They also suppress a number of genes including MCAM/MUC18, C/EBP alpha and MYC. AP-2-alpha is the only AP-2 protein required for early morphogenesis of the lens vesicle. Together with the CITED2 coactivator, stimulates the PITX2 P1 promoter transcription activation. Associates with chromatin to the PITX2 P1 promoter region. This Homo sapiens (Human) protein is Transcription factor AP-2-alpha (TFAP2A).